A 157-amino-acid chain; its full sequence is Ribonuclease H (157 aa).

Residues 2-145 (NAEISKIYTD…CDAIARAFAA (144 aa)) form the RNase H type-1 domain. Mg(2+)-binding residues include Asp-11, Glu-50, Asp-74, and Asp-137.

The protein belongs to the RNase H family. As to quaternary structure, monomer. It depends on Mg(2+) as a cofactor.

Its subcellular location is the cytoplasm. The catalysed reaction is Endonucleolytic cleavage to 5'-phosphomonoester.. Its function is as follows. Endonuclease that specifically degrades the RNA of RNA-DNA hybrids. This Cyanothece sp. (strain PCC 7425 / ATCC 29141) protein is Ribonuclease H.